Reading from the N-terminus, the 469-residue chain is Glutamate--tRNA ligase (469 aa).

The short motif at 9–19 (PSPTGFLHVGG) is the 'HIGH' region element. The 'KMSKS' region signature appears at 236–240 (KLSKR). Lys239 serves as a coordination point for ATP.

The protein belongs to the class-I aminoacyl-tRNA synthetase family. Glutamate--tRNA ligase type 1 subfamily. Monomer.

It localises to the cytoplasm. It carries out the reaction tRNA(Glu) + L-glutamate + ATP = L-glutamyl-tRNA(Glu) + AMP + diphosphate. Functionally, catalyzes the attachment of glutamate to tRNA(Glu) in a two-step reaction: glutamate is first activated by ATP to form Glu-AMP and then transferred to the acceptor end of tRNA(Glu). The chain is Glutamate--tRNA ligase from Pseudoalteromonas atlantica (strain T6c / ATCC BAA-1087).